The following is a 103-amino-acid chain: Phospholipase A2 large subunit (103 aa).

Residues tryptophan 7, glycine 9, and glycine 11 each contribute to the Ca(2+) site. 4 disulfide bridges follow: cysteine 8–cysteine 30, cysteine 29–cysteine 68, cysteine 36–cysteine 61, and cysteine 59–cysteine 96. Asparagine 16 is a glycosylation site (N-linked (GlcNAc...) asparagine). Residue histidine 33 is part of the active site. Residue aspartate 34 coordinates Ca(2+).

This sequence belongs to the phospholipase A2 family. Group III subfamily. Heterodimer composed of a large subunit and a small subunit; disulfide-linked. The cofactor is Ca(2+). Expressed by the venom gland.

Its subcellular location is the secreted. It carries out the reaction a 1,2-diacyl-sn-glycero-3-phosphocholine + H2O = a 1-acyl-sn-glycero-3-phosphocholine + a fatty acid + H(+). In terms of biological role, phospholipase toxin, which catalyzes the calcium-dependent hydrolysis of the 2-acyl groups in 3-sn-phosphoglycerides. Inhibits both skeletal (RYR1) and cardiac (RYR2) ryanodine receptors (calcium release channels). Probably blocks ryanodine receptors by generating a lipid product. This is Phospholipase A2 large subunit from Chersonesometrus fulvipes (Indian black scorpion).